Here is a 460-residue protein sequence, read N- to C-terminus: Elongation factor 1-alpha (460 aa).

At G2 the chain carries N,N,N-trimethylglycine. K3 bears the N6,N6-dimethyllysine; alternate mark. The residue at position 3 (K3) is an N6-methyllysine; alternate. The 236-residue stretch at 6–241 (KTHINVVVIG…DAIEPPKRPT (236 aa)) folds into the tr-type G domain. Residues 15–22 (GHVDSGKS) are G1. 15-22 (GHVDSGKS) is a binding site for GTP. K31 is modified (N6-methyllysine). Residues 71–75 (GITID) are G2. K80 is subject to N6,N6,N6-trimethyllysine. The G3 stretch occupies residues 92–95 (DAPG). GTP-binding positions include 92–96 (DAPGH) and 154–157 (NKMD). Residues 154–157 (NKMD) form a G4 region. The segment at 193 to 195 (SGF) is G5. Residue K317 is modified to N6,N6-dimethyllysine; alternate. Residue K317 is modified to N6-methyllysine; alternate. K391 is subject to N6-methyllysine.

It belongs to the TRAFAC class translation factor GTPase superfamily. Classic translation factor GTPase family. EF-Tu/EF-1A subfamily.

It is found in the cytoplasm. Its function is as follows. This protein promotes the GTP-dependent binding of aminoacyl-tRNA to the A-site of ribosomes during protein biosynthesis. The chain is Elongation factor 1-alpha (tef-1) from Neurospora crassa (strain ATCC 24698 / 74-OR23-1A / CBS 708.71 / DSM 1257 / FGSC 987).